The chain runs to 100 residues: Urease subunit gamma (100 aa).

The protein belongs to the urease gamma subunit family. As to quaternary structure, heterotrimer of UreA (gamma), UreB (beta) and UreC (alpha) subunits. Three heterotrimers associate to form the active enzyme.

Its subcellular location is the cytoplasm. The enzyme catalyses urea + 2 H2O + H(+) = hydrogencarbonate + 2 NH4(+). It participates in nitrogen metabolism; urea degradation; CO(2) and NH(3) from urea (urease route): step 1/1. The protein is Urease subunit gamma of Ectopseudomonas mendocina (strain ymp) (Pseudomonas mendocina).